The sequence spans 640 residues: LRR receptor kinase SERL2 (640 aa).

The signal sequence occupies residues 1-22; sequence MEPPFFLLLLLLVVSSSSPSAA. Residues 23 to 241 are Extracellular-facing; it reads LLSAKGVNNE…AARDRGHKFA (219 aa). N-linked (GlcNAc...) asparagine glycans are attached at residues asparagine 94 and asparagine 107. LRR repeat units follow at residues 95 to 119, 120 to 143, 145 to 167, and 168 to 191; these read LTNLETVLLQNNNITGPIPAEIGRL, ENLKTLDLSSNSFYGEIPSSVGHL, SLQYLRLNNNTLSGPFPSASANL, and SHLVFLDLSYNNLSGPIPESLART. Residues asparagine 153, asparagine 166, asparagine 179, and asparagine 222 are each glycosylated (N-linked (GlcNAc...) asparagine). The helical transmembrane segment at 242 to 262 threads the bilayer; sequence VAFGSTAGCMGLLLLAAGFLF. Residues 263–640 lie on the Cytoplasmic side of the membrane; the sequence is WWRHRRNRQI…VQAVELSGPR (378 aa). Residues 304–583 form the Protein kinase domain; that stretch reads FSGKNILGKG…EGDGLADRWE (280 aa). ATP-binding positions include 310-318 and lysine 332; that span reads LGKGGFGNV. Aspartate 427 (proton acceptor) is an active-site residue.

It belongs to the protein kinase superfamily. Ser/Thr protein kinase family. Interacts with MSBP1.

It is found in the cell membrane. The enzyme catalyses L-seryl-[protein] + ATP = O-phospho-L-seryl-[protein] + ADP + H(+). It carries out the reaction L-threonyl-[protein] + ATP = O-phospho-L-threonyl-[protein] + ADP + H(+). Its function is as follows. LRR receptor kinase that may be involved in defense response. This Oryza sativa subsp. japonica (Rice) protein is LRR receptor kinase SERL2.